Consider the following 428-residue polypeptide: Adenylosuccinate synthetase (428 aa).

GTP-binding positions include 12–18 (GDEGKGK) and 40–42 (GHT). Asp13 functions as the Proton acceptor in the catalytic mechanism. Positions 13 and 40 each coordinate Mg(2+). IMP contacts are provided by residues 13 to 16 (DEGK), 38 to 41 (NAGH), Thr128, Arg142, Gln223, Thr238, and Arg302. The active-site Proton donor is the His41. 298-304 (TTTGRPR) contributes to the substrate binding site. Residues Arg304, 330 to 332 (SID), and 412 to 414 (SVG) contribute to the GTP site.

It belongs to the adenylosuccinate synthetase family. In terms of assembly, homodimer. Mg(2+) serves as cofactor.

The protein localises to the cytoplasm. It catalyses the reaction IMP + L-aspartate + GTP = N(6)-(1,2-dicarboxyethyl)-AMP + GDP + phosphate + 2 H(+). Its pathway is purine metabolism; AMP biosynthesis via de novo pathway; AMP from IMP: step 1/2. In terms of biological role, plays an important role in the de novo pathway of purine nucleotide biosynthesis. Catalyzes the first committed step in the biosynthesis of AMP from IMP. The chain is Adenylosuccinate synthetase from Geobacillus kaustophilus (strain HTA426).